The following is a 710-amino-acid chain: Tubulin polyglutamylase TTLL11 (710 aa).

Positions 41–135 are disordered; that stretch reads VRVDAGAAGE…QRPVTVDSSK (95 aa). Residues 51-60 are compositionally biased toward basic and acidic residues; that stretch reads PECKAGEEQP. Residues 64–82 are compositionally biased toward low complexity; the sequence is APAPAQPSAAEEGNTQVLQ. The segment covering 83-93 has biased composition (pro residues); the sequence is RPPPTLPPSKP. Residues 123–135 are compositionally biased toward polar residues; the sequence is NGSQRPVTVDSSK. One can recognise a TTL domain in the interval 128-480; it reads PVTVDSSKAR…EVKVAVIRDT (353 aa). ATP-binding positions include Lys-249, 255–256, 282–285, and 295–297; these read QG, QEYI, and KFD. Gln-255 provides a ligand contact to a protein. Arg-321 is a binding site for L-glutamate. 343–344 serves as a coordination point for ATP; the sequence is TN. The L-glutamate site is built by Tyr-345, Ser-346, and Lys-365. Positions 428, 441, and 443 each coordinate Mg(2+). A c-MTBD region region spans residues 467–538; sequence LVDEEVKVAV…SICLKQVFPK (72 aa). Lys-473 lines the L-glutamate pocket. The disordered stretch occupies residues 665–710; the sequence is GVPSGGRPPHRGPPQEPSPSAQPAGDNPPPRTSCANKLSHPRHTLS.

It belongs to the tubulin--tyrosine ligase family. Requires Mg(2+) as cofactor.

It localises to the cytoplasm. It is found in the cytoskeleton. The protein localises to the cilium basal body. It catalyses the reaction L-glutamyl-[protein] + L-glutamate + ATP = gamma-L-glutamyl-L-glutamyl-[protein] + ADP + phosphate + H(+). The catalysed reaction is (L-glutamyl)(n)-gamma-L-glutamyl-L-glutamyl-[protein] + L-glutamate + ATP = (L-glutamyl)(n+1)-gamma-L-glutamyl-L-glutamyl-[protein] + ADP + phosphate + H(+). Functionally, polyglutamylase which modifies tubulin, generating polyglutamate side chains of variable lengths on the gamma-carboxyl group of specific glutamate residues within the C-terminal tail of tubulin. Preferentially mediates ATP-dependent polyglutamate long side-chain elongation over the initiation step of the polyglutamylation reaction. Preferentially modifies the alpha-tubulin tail over a beta-tail. Required for CCSAP localization to both spindle and cilia microtubules. Promotes tubulin polyglutamylation which stimulates spastin/SPAST-mediated microtubule severing, thereby regulating microtubule functions. The chain is Tubulin polyglutamylase TTLL11 from Homo sapiens (Human).